The sequence spans 266 residues: Syntaxin-71 (266 aa).

At 1–243 (MTVIDILTRV…TVNQLRSSRN (243 aa)) the chain is on the cytoplasmic side. Ser-12 is modified (phosphoserine). Positions 44-87 (ETQIETALEKAELVTKEKNRAAAVAMNAEIRRTKARLSEEVPKL) form a coiled coil. The segment at 122-146 (DGTAGGPKSTSAWTPSSTTSRPDIK) is disordered. Over residues 130–141 (STSAWTPSSTTS) the composition is skewed to low complexity. One can recognise a t-SNARE coiled-coil homology domain in the interval 172–234 (EMRKIKQEQG…KNTNVRLKDT (63 aa)). A helical; Anchor for type IV membrane protein membrane pass occupies residues 244 to 264 (FCIDIVLLCIVLGIAAYLYNV). Topologically, residues 265–266 (LK) are vesicular.

The protein belongs to the syntaxin family. In terms of assembly, part of the t-SNARE complex. As to expression, expressed in root, leaf, stem, flower and silique.

It localises to the membrane. Functionally, vesicle trafficking protein that functions in the secretory pathway. This chain is Syntaxin-71 (SYP71), found in Arabidopsis thaliana (Mouse-ear cress).